Here is a 125-residue protein sequence, read N- to C-terminus: MKYLWVALGGALGALARYTVGVWIYERLGTRFPYGTFAINVTGCFLIGLALTVLDAHMDLSPAWRLAIPTGFIGAYTTFSTFEYETLRAAQHGQMGTAVLYFGSSLALGILAVWLGMVVGNRIVA.

The next 2 membrane-spanning stretches (helical) occupy residues 4 to 24 and 34 to 54; these read LWVA…GVWI and YGTF…LTVL. 2 residues coordinate Na(+): Gly-74 and Thr-77. Residues 99–119 traverse the membrane as a helical segment; that stretch reads VLYFGSSLALGILAVWLGMVV.

This sequence belongs to the fluoride channel Fluc/FEX (TC 1.A.43) family.

It is found in the cell inner membrane. The catalysed reaction is fluoride(in) = fluoride(out). Its activity is regulated as follows. Na(+) is not transported, but it plays an essential structural role and its presence is essential for fluoride channel function. In terms of biological role, fluoride-specific ion channel. Important for reducing fluoride concentration in the cell, thus reducing its toxicity. In Acidobacterium capsulatum (strain ATCC 51196 / DSM 11244 / BCRC 80197 / JCM 7670 / NBRC 15755 / NCIMB 13165 / 161), this protein is Fluoride-specific ion channel FluC.